The sequence spans 158 residues: NADH-quinone oxidoreductase subunit B (158 aa).

The [4Fe-4S] cluster site is built by Cys-36, Cys-37, Cys-101, and Cys-131.

Belongs to the complex I 20 kDa subunit family. In terms of assembly, NDH-1 is composed of 14 different subunits. Subunits NuoB, C, D, E, F, and G constitute the peripheral sector of the complex. [4Fe-4S] cluster serves as cofactor.

Its subcellular location is the cell inner membrane. The enzyme catalyses a quinone + NADH + 5 H(+)(in) = a quinol + NAD(+) + 4 H(+)(out). Its function is as follows. NDH-1 shuttles electrons from NADH, via FMN and iron-sulfur (Fe-S) centers, to quinones in the respiratory chain. The immediate electron acceptor for the enzyme in this species is believed to be ubiquinone. Couples the redox reaction to proton translocation (for every two electrons transferred, four hydrogen ions are translocated across the cytoplasmic membrane), and thus conserves the redox energy in a proton gradient. This is NADH-quinone oxidoreductase subunit B from Francisella philomiragia subsp. philomiragia (strain ATCC 25017 / CCUG 19701 / FSC 153 / O#319-036).